The primary structure comprises 311 residues: Haloalkane dehalogenase (311 aa).

Positions 30–148 (AIVFQHGNPS…WDDFPDEVAQ (119 aa)) constitute an AB hydrolase-1 domain. Catalysis depends on Asp107, which acts as the Nucleophile. Glu131 acts as the Proton donor in catalysis. The active-site Proton acceptor is the His272.

The protein belongs to the haloalkane dehalogenase family. Type 2 subfamily. As to quaternary structure, monomer.

The catalysed reaction is 1-haloalkane + H2O = a halide anion + a primary alcohol + H(+). Catalyzes hydrolytic cleavage of carbon-halogen bonds in halogenated aliphatic compounds, leading to the formation of the corresponding primary alcohols, halide ions and protons. In Mycolicibacterium smegmatis (strain ATCC 700084 / mc(2)155) (Mycobacterium smegmatis), this protein is Haloalkane dehalogenase.